The following is a 205-amino-acid chain: SREBP regulating gene protein (205 aa).

The Cytoplasmic portion of the chain corresponds to 1-16 (MALYVSMVWRKILRKR). The chain crosses the membrane as a helical span at residues 17 to 35 (WVLGVVFGLSLIYFLTSTF). Residues 36–205 (KQEERTVRDR…GESPPELLPI (170 aa)) are Lumenal-facing. N-linked (GlcNAc...) asparagine glycosylation is present at asparagine 67.

The protein belongs to the SPRING family.

The protein resides in the golgi apparatus membrane. In terms of biological role, positively regulates hepatic SREBP signaling pathway by modulating the proper localization of SCAP (SREBP cleavage-activating protein) to the endoplasmic reticulum, thereby controlling the level of functional SCAP. The protein is SREBP regulating gene protein of Xenopus laevis (African clawed frog).